A 306-amino-acid polypeptide reads, in one-letter code: Pseudouridine-5'-phosphate glycosidase (306 aa).

Glu28 (proton donor) is an active-site residue. 2 residues coordinate substrate: Lys89 and Val109. Asp139 lines the Mn(2+) pocket. A substrate-binding site is contributed by 141–143; that stretch reads SAD. Lys160 acts as the Nucleophile in catalysis.

Belongs to the pseudouridine-5'-phosphate glycosidase family. As to quaternary structure, homotrimer. Mn(2+) is required as a cofactor.

It catalyses the reaction D-ribose 5-phosphate + uracil = psi-UMP + H2O. Its function is as follows. Catalyzes the reversible cleavage of pseudouridine 5'-phosphate (PsiMP) to ribose 5-phosphate and uracil. Functions biologically in the cleavage direction, as part of a pseudouridine degradation pathway. The polypeptide is Pseudouridine-5'-phosphate glycosidase (Gemmatimonas aurantiaca (strain DSM 14586 / JCM 11422 / NBRC 100505 / T-27)).